The primary structure comprises 244 residues: Phosphoadenosine 5'-phosphosulfate reductase (244 aa).

The Nucleophile; cysteine thiosulfonate intermediate role is filled by Cys-239.

This sequence belongs to the PAPS reductase family. CysH subfamily.

The protein localises to the cytoplasm. It catalyses the reaction [thioredoxin]-disulfide + sulfite + adenosine 3',5'-bisphosphate + 2 H(+) = [thioredoxin]-dithiol + 3'-phosphoadenylyl sulfate. The protein operates within sulfur metabolism; hydrogen sulfide biosynthesis; sulfite from sulfate: step 3/3. In terms of biological role, catalyzes the formation of sulfite from phosphoadenosine 5'-phosphosulfate (PAPS) using thioredoxin as an electron donor. This Shigella boydii serotype 4 (strain Sb227) protein is Phosphoadenosine 5'-phosphosulfate reductase.